Here is a 59-residue protein sequence, read N- to C-terminus: Large ribosomal subunit protein bL32 (59 aa).

Residues 1–59 form a disordered region; the sequence is MAVQQNKKSPSKRGMHRSHDHLSVAPLAVEPTTGETHLRHHVSPNGYYRGRKVIKTKND. 2 stretches are compositionally biased toward basic residues: residues 9-19 and 49-59; these read SPSKRGMHRSH and RGRKVIKTKND.

The protein belongs to the bacterial ribosomal protein bL32 family.

The chain is Large ribosomal subunit protein bL32 from Cupriavidus metallidurans (strain ATCC 43123 / DSM 2839 / NBRC 102507 / CH34) (Ralstonia metallidurans).